The following is a 180-amino-acid chain: uncharacterized protein (180 aa).

Positions 1 to 93 (MPSSVPKTSI…LPRRRNPGWV (93 aa)) are disordered. Low complexity-rich tracts occupy residues 9–25 (SIES…SQAS) and 47–64 (LTSS…SSSQ).

This is an uncharacterized protein from Homo sapiens (Human).